Consider the following 316-residue polypeptide: Ribosomal RNA small subunit methyltransferase H (316 aa).

S-adenosyl-L-methionine is bound by residues 35–37 (SGH), Asp55, Phe84, Asp105, and Gln112.

This sequence belongs to the methyltransferase superfamily. RsmH family.

It is found in the cytoplasm. The catalysed reaction is cytidine(1402) in 16S rRNA + S-adenosyl-L-methionine = N(4)-methylcytidine(1402) in 16S rRNA + S-adenosyl-L-homocysteine + H(+). Specifically methylates the N4 position of cytidine in position 1402 (C1402) of 16S rRNA. This chain is Ribosomal RNA small subunit methyltransferase H, found in Streptococcus pyogenes serotype M18 (strain MGAS8232).